The sequence spans 342 residues: dTDP-3,4-didehydro-2,6-dideoxy-alpha-D-glucose 3-reductase (342 aa).

19–25 serves as a coordination point for NADP(+); it reads CADIALR. Position 26 (R26) interacts with substrate. NADP(+) contacts are provided by residues 44-45, Y65, L81, and H86; that span reads SR. K104 acts as the Proton donor in catalysis. Residues R172 and D184 each coordinate NADP(+). Residues Y243 and S263 each contribute to the substrate site.

It belongs to the Gfo/Idh/MocA family.

It catalyses the reaction dTDP-4-dehydro-2,6-dideoxy-alpha-D-glucose + NADP(+) = dTDP-3,4-didehydro-2,6-dideoxy-alpha-D-glucose + NADPH + H(+). It participates in antibiotic biosynthesis; granaticin biosynthesis. Functionally, involved in the biosynthesis of the 2,6-deoxysugar, dTDP-L-rhodinose, attached to the benzoisochromane quinone chromophore to produce the aglycone antibiotics granaticin and granaticin B. Catalyzes the reduction of the C-3 keto moiety of dTDP-3,4-diketo-2,6-dideoxy-alpha-D-glucose to yield dTDP-4-keto-2,6-dideoxy-alpha-D-glucose. NADPH is the better reductant, however NADH can also be used. The protein is dTDP-3,4-didehydro-2,6-dideoxy-alpha-D-glucose 3-reductase of Streptomyces violaceoruber.